Reading from the N-terminus, the 123-residue chain is Small ribosomal subunit protein bS16 (123 aa).

Positions 86–123 (PVRAEQTKQPQPKAKAQQRAKDQAERDAAAAAEAAAGE) are disordered. A compositionally biased stretch (low complexity) spans 93–102 (KQPQPKAKAQ). Over residues 104–113 (RAKDQAERDA) the composition is skewed to basic and acidic residues. The span at 114–123 (AAAAEAAAGE) shows a compositional bias: low complexity.

This sequence belongs to the bacterial ribosomal protein bS16 family.

The polypeptide is Small ribosomal subunit protein bS16 (Paramagnetospirillum magneticum (strain ATCC 700264 / AMB-1) (Magnetospirillum magneticum)).